The sequence spans 178 residues: Large ribosomal subunit protein uL6 (178 aa).

This sequence belongs to the universal ribosomal protein uL6 family. Part of the 50S ribosomal subunit.

In terms of biological role, this protein binds to the 23S rRNA, and is important in its secondary structure. It is located near the subunit interface in the base of the L7/L12 stalk, and near the tRNA binding site of the peptidyltransferase center. This Campylobacter jejuni subsp. jejuni serotype O:2 (strain ATCC 700819 / NCTC 11168) protein is Large ribosomal subunit protein uL6.